A 1102-amino-acid polypeptide reads, in one-letter code: MQETFKFLRSNSQGEAVEDKYSLETLKNHFVIRDEYNNLFRVFSGRDDFWKWEAAQPFEQKCFHEVVFGFLPQRLKFDIDFPVNKSYSNDNVDDNVDDNVYNILDMIINVIMDVFYETYSLPYNINLTREQILLTDSIGLNKKRELKYSFHIILYTYSVLNNNEAKAFTSKVLENLPKHIYPFVDPQVNKSIQNFRIIGSHKKGSMRVKMFNEELADVFETSMTTKKSDTLISTPFETTCLPCILTNVKETTSSSCDSIQQSELEEVLKFAGTLCKNHCFLRVYKNLVLFKRTSPSYCEICKRMHDKDNTLILRVTGNKVYQHCRHDNKHSLLMGSLSGTNNFVETYVEQVMSKSIEVHESILFEELPDTQKHIYDESSMREYERVPTLVVKAQMKIGKTIQLRNYLQKYYGNDSISKQQTIRFVTFRQIFSKNIQTRLPNFTLYSEVTGDLDSYERVIIQVESLFRLTSTAEPVDLLILDEVESIFNQFNSGLHKYFAPSFAIFMWMLETANHVICLDANLGNRTYNILQRFRGDVPIFFHWNQYQKAQNDMYYFTSSREIWLNNLLKDLLEDKKIVIPTNSLMEARLLQTFIQKKFPEKKIGFYSSKSSAHERESHFNNVSYYWGLIDILIYTPTISAGVSYEDKRFDVLYGFFNNMSCDVETCCQMLGRVRELKSKCYKICLQGKQNYFPETIEDIEMFTLQKRDTLFQTISNHQLSFTYCKETGRPIYYKTPYYHLWLETMRIQHLSKNHFITRFINQVADTGAKVFILTGEKLETVKQYTSIKMEIKHQDYVNVASAETIDANKALQIKQNLKEGITVDQRDLFAYEKYKLLEFYAWHGNKITPKFVEQYNSFMTKQNYTGRVQISRGKTVYESLTMLQTQELNFHQWAMQHAEHHDLQFNYSFQSHMYAIMLLTKCGFKCVQDPNILTNEQLMTKLVDEFVQYDLSAVSFEFKLKKPNKMDPQTILKFINKVLGLRYGLKIHHNKGNYYIKNTKAGSLIPFVRQPIKQSPCVVSNLLPITESSSTKEEISSTKEETYSTKEETYSTKEETCSIKEEISPIKEETCSIKEEISPIKEETCSIKEETSSIKEETFTET.

Disordered regions lie at residues 1031–1057 and 1082–1102; these read TKEE…EETC and EETC…FTET.

The protein belongs to the asfivirus F1055L family.

In terms of biological role, may be involved in DNA replication. The chain is Putative helicase/primase complex protein from African swine fever virus (isolate Tick/Malawi/Lil 20-1/1983) (ASFV).